We begin with the raw amino-acid sequence, 985 residues long: Alpha-glucosidase (985 aa).

Positions 1 to 25 (MAGLKSFLASSWLLPVACGASQSIV) are cleaved as a signal peptide. Residues Asn-126, Asn-145, Asn-220, Asn-255, Asn-349, and Asn-424 are each glycosylated (N-linked (GlcNAc...) asparagine). The active-site Nucleophile is the Asp-492. Glu-495 is an active-site residue. Asn-508, Asn-536, Asn-539, Asn-602, and Asn-624 each carry an N-linked (GlcNAc...) asparagine glycan. Asp-660 (proton donor) is an active-site residue. Asn-661, Asn-835, Asn-881, Asn-929, and Asn-957 each carry an N-linked (GlcNAc...) asparagine glycan.

This sequence belongs to the glycosyl hydrolase 31 family.

The enzyme catalyses Hydrolysis of terminal, non-reducing (1-&gt;4)-linked alpha-D-glucose residues with release of alpha-D-glucose.. Hydrolyzes malto-oligosaccharides, but has a low activity toward soluble starch. This is Alpha-glucosidase (agdA) from Aspergillus oryzae (strain ATCC 42149 / RIB 40) (Yellow koji mold).